The primary structure comprises 330 residues: tRNA-modifying protein YgfZ (330 aa).

Folate contacts are provided by tryptophan 28 and tryptophan 190.

This sequence belongs to the tRNA-modifying YgfZ family.

The protein resides in the cytoplasm. Its function is as follows. Folate-binding protein involved in regulating the level of ATP-DnaA and in the modification of some tRNAs. It is probably a key factor in regulatory networks that act via tRNA modification, such as initiation of chromosomal replication. This is tRNA-modifying protein YgfZ from Yersinia enterocolitica serotype O:8 / biotype 1B (strain NCTC 13174 / 8081).